The sequence spans 339 residues: Phenylalanine--tRNA ligase alpha subunit (339 aa).

Glutamate 254 is a binding site for Mg(2+).

It belongs to the class-II aminoacyl-tRNA synthetase family. Phe-tRNA synthetase alpha subunit type 1 subfamily. As to quaternary structure, tetramer of two alpha and two beta subunits. Mg(2+) serves as cofactor.

It localises to the cytoplasm. It catalyses the reaction tRNA(Phe) + L-phenylalanine + ATP = L-phenylalanyl-tRNA(Phe) + AMP + diphosphate + H(+). This is Phenylalanine--tRNA ligase alpha subunit (pheS) from Chlamydia pneumoniae (Chlamydophila pneumoniae).